The primary structure comprises 542 residues: Phenylalanine--tRNA ligase beta subunit (542 aa).

The region spanning 269–344 is the B5 domain; sequence LRRYTVSVSA…MTIGYDKLSP (76 aa). Residues Asp322, Asp328, Glu331, and Glu332 each coordinate Mg(2+).

Belongs to the phenylalanyl-tRNA synthetase beta subunit family. Type 2 subfamily. As to quaternary structure, tetramer of two alpha and two beta subunits. The cofactor is Mg(2+).

It localises to the cytoplasm. The enzyme catalyses tRNA(Phe) + L-phenylalanine + ATP = L-phenylalanyl-tRNA(Phe) + AMP + diphosphate + H(+). The sequence is that of Phenylalanine--tRNA ligase beta subunit from Sulfolobus acidocaldarius (strain ATCC 33909 / DSM 639 / JCM 8929 / NBRC 15157 / NCIMB 11770).